The primary structure comprises 219 residues: Small ribosomal subunit protein eS1 (219 aa).

It belongs to the eukaryotic ribosomal protein eS1 family. As to quaternary structure, component of the small ribosomal subunit. Mature ribosomes consist of a small (40S) and a large (60S) subunit. The 40S subunit contains about 33 different proteins and 1 molecule of RNA (18S). The 60S subunit contains about 49 different proteins and 3 molecules of RNA (25S, 5.8S and 5S).

The protein resides in the cytoplasm. This is Small ribosomal subunit protein eS1 from Guillardia theta (Cryptophyte).